Here is a 118-residue protein sequence, read N- to C-terminus: V-type proton ATPase subunit G 3 (118 aa).

Over residues 1 to 12 (MASQSQGIQQLL) the composition is skewed to polar residues. Residues 1–37 (MASQSQGIQQLLQAEKRAKDKLEEAKKRKNKRLRQAK) are disordered. Residues 3 to 53 (SQSQGIQQLLQAEKRAKDKLEEAKKRKNKRLRQAKEEATADIDQYRLKREG) are a coiled coil. A compositionally biased stretch (basic and acidic residues) spans 14–26 (AEKRAKDKLEEAK).

It belongs to the V-ATPase G subunit family. In terms of assembly, V-ATPase is a heteromultimeric enzyme made up of two complexes: the ATP-hydrolytic V1 complex and the proton translocation V0 complex. The V1 complex consists of three catalytic AB heterodimers that form a heterohexamer, three peripheral stalks each consisting of EG heterodimers, one central rotor including subunits D and F, and the regulatory subunits C and H. The proton translocation complex V0 consists of the proton transport subunit a, a ring of proteolipid subunits c9c'', rotary subunit d, subunits e and f, and two accessory subunits.

Subunit of the V1 complex of vacuolar(H+)-ATPase (V-ATPase), a multisubunit enzyme composed of a peripheral complex (V1) that hydrolyzes ATP and a membrane integral complex (V0) that translocates protons. V-ATPase is responsible for acidifying and maintaining the pH of intracellular compartments and in some cell types, is targeted to the plasma membrane, where it is responsible for acidifying the extracellular environment. The protein is V-type proton ATPase subunit G 3 (atp6v1g3) of Xenopus tropicalis (Western clawed frog).